We begin with the raw amino-acid sequence, 50 residues long: uncharacterized protein (50 aa).

This is an uncharacterized protein from Ornithodoros (relapsing fever ticks).